We begin with the raw amino-acid sequence, 189 residues long: Crossover junction endodeoxyribonuclease RuvC (189 aa).

Active-site residues include Asp-7, Glu-68, and Asp-141. Residues Asp-7, Glu-68, and Asp-141 each coordinate Mg(2+).

Belongs to the RuvC family. In terms of assembly, homodimer which binds Holliday junction (HJ) DNA. The HJ becomes 2-fold symmetrical on binding to RuvC with unstacked arms; it has a different conformation from HJ DNA in complex with RuvA. In the full resolvosome a probable DNA-RuvA(4)-RuvB(12)-RuvC(2) complex forms which resolves the HJ. The cofactor is Mg(2+).

Its subcellular location is the cytoplasm. The catalysed reaction is Endonucleolytic cleavage at a junction such as a reciprocal single-stranded crossover between two homologous DNA duplexes (Holliday junction).. In terms of biological role, the RuvA-RuvB-RuvC complex processes Holliday junction (HJ) DNA during genetic recombination and DNA repair. Endonuclease that resolves HJ intermediates. Cleaves cruciform DNA by making single-stranded nicks across the HJ at symmetrical positions within the homologous arms, yielding a 5'-phosphate and a 3'-hydroxyl group; requires a central core of homology in the junction. The consensus cleavage sequence is 5'-(A/T)TT(C/G)-3'. Cleavage occurs on the 3'-side of the TT dinucleotide at the point of strand exchange. HJ branch migration catalyzed by RuvA-RuvB allows RuvC to scan DNA until it finds its consensus sequence, where it cleaves and resolves the cruciform DNA. This chain is Crossover junction endodeoxyribonuclease RuvC, found in Chlorobium phaeovibrioides (strain DSM 265 / 1930) (Prosthecochloris vibrioformis (strain DSM 265)).